A 288-amino-acid polypeptide reads, in one-letter code: Quinate/shikimate dehydrogenase (288 aa).

Positions 71 and 107 each coordinate substrate. Residues 132–135, 155–158, Lys205, 232–235, and Gly255 contribute to the NAD(+) site; these read AGGA, NRRD, and CVYN.

The protein belongs to the shikimate dehydrogenase family. Homodimer.

It catalyses the reaction L-quinate + NAD(+) = 3-dehydroquinate + NADH + H(+). The catalysed reaction is L-quinate + NADP(+) = 3-dehydroquinate + NADPH + H(+). It carries out the reaction shikimate + NADP(+) = 3-dehydroshikimate + NADPH + H(+). The enzyme catalyses shikimate + NAD(+) = 3-dehydroshikimate + NADH + H(+). It functions in the pathway metabolic intermediate biosynthesis; chorismate biosynthesis; chorismate from D-erythrose 4-phosphate and phosphoenolpyruvate: step 4/7. In terms of biological role, the actual biological function of YdiB remains unclear, nor is it known whether 3-dehydroshikimate or quinate represents the natural substrate. Catalyzes the reversible NAD-dependent reduction of both 3-dehydroshikimate (DHSA) and 3-dehydroquinate to yield shikimate (SA) and quinate, respectively. It can use both NAD or NADP for catalysis, however it has higher catalytic efficiency with NAD. This chain is Quinate/shikimate dehydrogenase, found in Shigella flexneri.